A 711-amino-acid chain; its full sequence is MND1-interacting protein 1 (711 aa).

Residues 390-648 (EWAQKNAMQA…LEGSYDNEAN (259 aa)) adopt a coiled-coil conformation. Disordered stretches follow at residues 552-571 (EALAQMEEEQRSKEAAEGHN) and 602-622 (RLKASSDSDSSHISNNAWKPK). Positions 602-611 (RLKASSDSDS) are enriched in basic and acidic residues. An RING-type zinc finger spans residues 653–697 (CIICMKDEVSVVFLPCAHQVVCGSCSDSFFASNNGGSKVTCPCCR).

As to quaternary structure, interacts (via C-terminal domain) with MND1 and HOP2. Interacts with XRI1 (via C-terminal domain).

The polypeptide is MND1-interacting protein 1 (MIP1) (Arabidopsis thaliana (Mouse-ear cress)).